A 28-amino-acid chain; its full sequence is uncharacterized protein (28 aa).

Residues 5–27 traverse the membrane as a helical segment; that stretch reads SAFHACNIIFLPLVKCASATIML.

It localises to the membrane. This is an uncharacterized protein from Saccharomyces cerevisiae (strain ATCC 204508 / S288c) (Baker's yeast).